The sequence spans 858 residues: DNA mismatch repair protein MutS (858 aa).

ATP is bound at residue 600-607 (GPNMSGKS).

It belongs to the DNA mismatch repair MutS family.

Functionally, this protein is involved in the repair of mismatches in DNA. It is possible that it carries out the mismatch recognition step. This protein has a weak ATPase activity. The polypeptide is DNA mismatch repair protein MutS (Bacillus pumilus (strain SAFR-032)).